The sequence spans 334 residues: Holliday junction branch migration complex subunit RuvB (334 aa).

The tract at residues 1-181 is large ATPase domain (RuvB-L); sequence MSEFLTPERT…GIILELDFYT (181 aa). Residues L19 and R20 each contribute to the ADP site. E26, F27, and I28 together coordinate ATP. 8 residues coordinate ADP: F27, I28, G61, L62, G63, K64, T65, and T66. L62 and G63 together coordinate ATP. ATP is bound by residues 127 to 129 and R170; that span reads EDF. Residues Y180, P216, and R217 each coordinate ADP. Residues 182–255 are small ATPAse domain (RuvB-S); that stretch reads VKELKEIIKR…TMEVLNIDDE (74 aa). P216 provides a ligand contact to ATP. The tract at residues 256–334 is head domain (RuvB-H); the sequence is GLDEFDRKIL…KYEVPENRLF (79 aa). 2 residues coordinate DNA: R309 and R314.

It belongs to the RuvB family. As to quaternary structure, homohexamer. Forms an RuvA(8)-RuvB(12)-Holliday junction (HJ) complex. HJ DNA is sandwiched between 2 RuvA tetramers; dsDNA enters through RuvA and exits via RuvB. An RuvB hexamer assembles on each DNA strand where it exits the tetramer. Each RuvB hexamer is contacted by two RuvA subunits (via domain III) on 2 adjacent RuvB subunits; this complex drives branch migration. In the full resolvosome a probable DNA-RuvA(4)-RuvB(12)-RuvC(2) complex forms which resolves the HJ.

The protein localises to the cytoplasm. It carries out the reaction ATP + H2O = ADP + phosphate + H(+). In terms of biological role, the RuvA-RuvB-RuvC complex processes Holliday junction (HJ) DNA during genetic recombination and DNA repair, while the RuvA-RuvB complex plays an important role in the rescue of blocked DNA replication forks via replication fork reversal (RFR). RuvA specifically binds to HJ cruciform DNA, conferring on it an open structure. The RuvB hexamer acts as an ATP-dependent pump, pulling dsDNA into and through the RuvAB complex. RuvB forms 2 homohexamers on either side of HJ DNA bound by 1 or 2 RuvA tetramers; 4 subunits per hexamer contact DNA at a time. Coordinated motions by a converter formed by DNA-disengaged RuvB subunits stimulates ATP hydrolysis and nucleotide exchange. Immobilization of the converter enables RuvB to convert the ATP-contained energy into a lever motion, pulling 2 nucleotides of DNA out of the RuvA tetramer per ATP hydrolyzed, thus driving DNA branch migration. The RuvB motors rotate together with the DNA substrate, which together with the progressing nucleotide cycle form the mechanistic basis for DNA recombination by continuous HJ branch migration. Branch migration allows RuvC to scan DNA until it finds its consensus sequence, where it cleaves and resolves cruciform DNA. Functionally, promotes Holliday junction (HJ) branch migration in conjunction with RuvA. Subunits can be free, ADP- or ATP-bound; nucleotide binding changes during the reaction cycle. Has a DNA-dependent ATPase activity; dsDNA and supercoiled DNA but not ssDNA stimulate activity. The chain is Holliday junction branch migration complex subunit RuvB from Thermotoga maritima (strain ATCC 43589 / DSM 3109 / JCM 10099 / NBRC 100826 / MSB8).